Reading from the N-terminus, the 322-residue chain is N-acetyl-gamma-glutamyl-phosphate reductase (322 aa).

Cysteine 132 is an active-site residue.

The protein belongs to the NAGSA dehydrogenase family. Type 1 subfamily.

Its subcellular location is the cytoplasm. It carries out the reaction N-acetyl-L-glutamate 5-semialdehyde + phosphate + NADP(+) = N-acetyl-L-glutamyl 5-phosphate + NADPH + H(+). It participates in amino-acid biosynthesis; L-arginine biosynthesis; N(2)-acetyl-L-ornithine from L-glutamate: step 3/4. In terms of biological role, catalyzes the NADPH-dependent reduction of N-acetyl-5-glutamyl phosphate to yield N-acetyl-L-glutamate 5-semialdehyde. The polypeptide is N-acetyl-gamma-glutamyl-phosphate reductase (Bacteroides thetaiotaomicron (strain ATCC 29148 / DSM 2079 / JCM 5827 / CCUG 10774 / NCTC 10582 / VPI-5482 / E50)).